We begin with the raw amino-acid sequence, 285 residues long: V-set and transmembrane domain-containing protein 2B (285 aa).

An N-terminal signal peptide occupies residues 1–28; that stretch reads MEQRNRLGALGYLPPLLLHALLLFVADA. One can recognise an Ig-like V-type domain in the interval 29–143; that stretch reads AFTEVPKDVT…DDDTQEHKAQ (115 aa). Over 29–263 the chain is Extracellular; that stretch reads AFTEVPKDVT…HGSGTGRSYT (235 aa). Cys49 and Cys127 are joined by a disulfide. The interval 161–226 is disordered; sequence EAVSHIQSSG…EAAAASAAHT (66 aa). 2 stretches are compositionally biased toward low complexity: residues 177–189 and 208–226; these read ASAA…GAAS and PAAI…AAHT. Residues 264 to 284 traverse the membrane as a helical segment; that stretch reads TDPLLSLLLLALHKFLRLLLG. A topological domain (cytoplasmic) is located at residue His285.

It is found in the membrane. This chain is V-set and transmembrane domain-containing protein 2B (VSTM2B), found in Homo sapiens (Human).